Here is a 165-residue protein sequence, read N- to C-terminus: Small ribosomal subunit protein uS5 (165 aa).

The 64-residue stretch at 10–73 folds into the S5 DRBM domain; sequence LVEKLVSVDR…EAAKRNMITV (64 aa).

This sequence belongs to the universal ribosomal protein uS5 family. Part of the 30S ribosomal subunit. Contacts proteins S4 and S8.

Functionally, with S4 and S12 plays an important role in translational accuracy. In terms of biological role, located at the back of the 30S subunit body where it stabilizes the conformation of the head with respect to the body. This chain is Small ribosomal subunit protein uS5, found in Psychrobacter sp. (strain PRwf-1).